The chain runs to 460 residues: MKLWGGRFSKNTAALVDQFNASIEFDQKLYKYDIAGSVAHAKMLAHANIITKQESQLIVEGLQSILADIEAGKVEFQLELEDIHMNIETLLIDSIGEVGKKLHTARSRNDQVAVDIRLYLREEILEICELIKQLLITFTDIAEKHVDTIMPGYTHLQRAQAVTLGHHFMAYFQMFKRDHERLLDCYKRVNVMPLGAGALAGTTYATDRVFLAKELGFDAICENSLDAVSDRDFIIEFNNTASIIMMHLSRFCEELIIWNTAEFGFIEMDDAYSTGSSIMPQKKNPDLAELIRGKTGRVYGNQVNIMTMMKALPLAYNKDMQEDKIPLFDTVDNVKGCLEIFNEMIKSTTFKKENMKKATKEGFMNATDVADYLVKKGVPFRSAHEIVGKMVLHCVQTSKTIEDLTLDEFQNFSPTFTEDILEVIQIENCVASKISQGSTSPTNVLIMVNQARVFIEEVLS.

Belongs to the lyase 1 family. Argininosuccinate lyase subfamily.

The protein resides in the cytoplasm. It carries out the reaction 2-(N(omega)-L-arginino)succinate = fumarate + L-arginine. It participates in amino-acid biosynthesis; L-arginine biosynthesis; L-arginine from L-ornithine and carbamoyl phosphate: step 3/3. The sequence is that of Argininosuccinate lyase from Alkaliphilus metalliredigens (strain QYMF).